The chain runs to 336 residues: NADH-quinone oxidoreductase subunit H (336 aa).

8 consecutive transmembrane segments (helical) span residues 4–24 (YILW…LVVA), 75–95 (YLFF…WAVI), 108–128 (LGLL…VIAG), 154–174 (MGFA…TGII), 181–201 (IWHW…IAGI), 233–253 (LFFL…SIMF), 272–292 (FVPG…MFLW), and 308–328 (LGWK…ACMV).

The protein belongs to the complex I subunit 1 family. As to quaternary structure, NDH-1 is composed of 14 different subunits. Subunits NuoA, H, J, K, L, M, N constitute the membrane sector of the complex.

Its subcellular location is the cell inner membrane. The catalysed reaction is a quinone + NADH + 5 H(+)(in) = a quinol + NAD(+) + 4 H(+)(out). NDH-1 shuttles electrons from NADH, via FMN and iron-sulfur (Fe-S) centers, to quinones in the respiratory chain. The immediate electron acceptor for the enzyme in this species is believed to be ubiquinone. Couples the redox reaction to proton translocation (for every two electrons transferred, four hydrogen ions are translocated across the cytoplasmic membrane), and thus conserves the redox energy in a proton gradient. This subunit may bind ubiquinone. The protein is NADH-quinone oxidoreductase subunit H of Francisella tularensis subsp. tularensis (strain FSC 198).